Consider the following 166-residue polypeptide: Signal peptidase complex catalytic subunit SEC11 (166 aa).

Topologically, residues 1 to 9 (MNIRQQLTQ) are cytoplasmic. Residues 10 to 30 (FLSLAYVFTSAFVIWKSLGII) form a helical; Signal-anchor for type II membrane protein membrane-spanning segment. Topologically, residues 31–166 (TNSHSPIVVV…MCISTLLTNE (136 aa)) are lumenal. Residues serine 44, histidine 83, and aspartate 108 each act as charge relay system in the active site. The segment at 152–163 (GMLGLMCISTLL) is C-terminal short (CTS) helix.

Belongs to the peptidase S26B family. Component of the signal peptidase complex (SPC) composed of a catalytic subunit SEC11 and three accessory subunits SPC1, SPC2 and SPC3. The complex induces a local thinning of the ER membrane which is used to measure the length of the signal peptide (SP) h-region of protein substrates. This ensures the selectivity of the complex towards h-regions shorter than 18-20 amino acids. SPC associates with the translocon complex.

It localises to the endoplasmic reticulum membrane. The enzyme catalyses Cleavage of hydrophobic, N-terminal signal or leader sequences from secreted and periplasmic proteins.. In terms of biological role, catalytic component of the signal peptidase complex (SPC) which catalyzes the cleavage of N-terminal signal sequences from nascent proteins as they are translocated into the lumen of the endoplasmic reticulum. Specifically cleaves N-terminal signal peptides that contain a hydrophobic alpha-helix (h-region) shorter than 18-20 amino acids. The protein is Signal peptidase complex catalytic subunit SEC11 (SEC11) of Scheffersomyces stipitis (strain ATCC 58785 / CBS 6054 / NBRC 10063 / NRRL Y-11545) (Yeast).